The following is a 338-amino-acid chain: Holliday junction branch migration complex subunit RuvB (338 aa).

Positions 4–184 (ADRLMSAAAV…FGIVQRLEFY (181 aa)) are large ATPase domain (RuvB-L). ATP is bound by residues Ile-23, Arg-24, Gly-65, Lys-68, Thr-69, Thr-70, 131–133 (EDY), Arg-174, Tyr-184, and Arg-221. Thr-69 contacts Mg(2+). The small ATPAse domain (RuvB-S) stretch occupies residues 185–255 (QTGDLQHIVS…VAVSALNMLN (71 aa)). Residues 258-338 (TEGFDFMDRK…GLEEHGGDPE (81 aa)) are head domain (RuvB-H). DNA-binding residues include Arg-294, Arg-313, and Arg-318.

The protein belongs to the RuvB family. As to quaternary structure, homohexamer. Forms an RuvA(8)-RuvB(12)-Holliday junction (HJ) complex. HJ DNA is sandwiched between 2 RuvA tetramers; dsDNA enters through RuvA and exits via RuvB. An RuvB hexamer assembles on each DNA strand where it exits the tetramer. Each RuvB hexamer is contacted by two RuvA subunits (via domain III) on 2 adjacent RuvB subunits; this complex drives branch migration. In the full resolvosome a probable DNA-RuvA(4)-RuvB(12)-RuvC(2) complex forms which resolves the HJ.

It is found in the cytoplasm. It carries out the reaction ATP + H2O = ADP + phosphate + H(+). Functionally, the RuvA-RuvB-RuvC complex processes Holliday junction (HJ) DNA during genetic recombination and DNA repair, while the RuvA-RuvB complex plays an important role in the rescue of blocked DNA replication forks via replication fork reversal (RFR). RuvA specifically binds to HJ cruciform DNA, conferring on it an open structure. The RuvB hexamer acts as an ATP-dependent pump, pulling dsDNA into and through the RuvAB complex. RuvB forms 2 homohexamers on either side of HJ DNA bound by 1 or 2 RuvA tetramers; 4 subunits per hexamer contact DNA at a time. Coordinated motions by a converter formed by DNA-disengaged RuvB subunits stimulates ATP hydrolysis and nucleotide exchange. Immobilization of the converter enables RuvB to convert the ATP-contained energy into a lever motion, pulling 2 nucleotides of DNA out of the RuvA tetramer per ATP hydrolyzed, thus driving DNA branch migration. The RuvB motors rotate together with the DNA substrate, which together with the progressing nucleotide cycle form the mechanistic basis for DNA recombination by continuous HJ branch migration. Branch migration allows RuvC to scan DNA until it finds its consensus sequence, where it cleaves and resolves cruciform DNA. The chain is Holliday junction branch migration complex subunit RuvB from Sodalis glossinidius (strain morsitans).